The primary structure comprises 238 residues: MQWREMGVVMGTRPYGDEHLLLSILTRNRGLRRGLTRLTKKRPLQIGDLIDATWRAKLPTNLGHFTCEVIASAFYSYFRDRIKLMCLSSITHIMSTALPENEPHPTLYDSFQDFAAAAEAEAPWYNHYLKLELLVLSQLGFALDLSKCAVSNSKDNLLFISPKTGRALSEAVGHAYRNKLLPLPKVLRSISCGVETECCSADEFALSLKILGFFLHRHLLQESHTFQESRKILTGLLG.

Belongs to the RecO family.

Involved in DNA repair and RecF pathway recombination. In Anaplasma marginale (strain Florida), this protein is DNA repair protein RecO.